We begin with the raw amino-acid sequence, 331 residues long: Nucleotide sugar transporter SLC35B4 (331 aa).

The next 11 helical transmembrane spans lie at 4–24, 30–50, 59–79, 92–112, 124–144, 153–173, 201–221, 229–249, 251–267, 268–288, and 294–314; these read AFAV…LELL, GCGN…GFLF, PAIP…VSVV, LHMI…IIIL, IALV…QVTV, GFQA…ALLM, ALPL…VVLF, VPVI…NVVT, YVCI…CTSL, TVTL…ILYF, and MWHW…TEVW. Positions 326-331 match the Mediates endoplasmic reticulum retention motif; the sequence is KDDKKD.

The protein belongs to the nucleotide-sugar transporter family. SLC35B subfamily.

The protein resides in the endoplasmic reticulum membrane. The catalysed reaction is UDP-N-acetyl-alpha-D-glucosamine(in) + UDP-alpha-D-glucuronate(out) = UDP-N-acetyl-alpha-D-glucosamine(out) + UDP-alpha-D-glucuronate(in). It catalyses the reaction UDP-alpha-D-xylose(in) + UDP-alpha-D-glucuronate(out) = UDP-alpha-D-xylose(out) + UDP-alpha-D-glucuronate(in). Antiporter that transports nucleotide sugars across the endoplasmic reticulum (ER) membrane in exchange for another nucleotide sugar. May couple UDP-alpha-D-glucuronate (UDP-GlcA) or UDP-alpha-D-xylose (UDP-Xyl) efflux to UDP-alpha-D-glucuronate (UDP-GlcA) influx into the ER lumen, which in turn stimulates glucuronidation and excretion of endobiotics and xenobiotics. The chain is Nucleotide sugar transporter SLC35B4 (Slc35b4) from Mus musculus (Mouse).